The chain runs to 368 residues: mRNA export factor (368 aa).

Positions 15-34 (TSMFGSTTTDNHNPMKDIEV) are disordered. 7 WD repeats span residues 37–79 (SPDD…QTIP), 84–114 (MHTG…KMWD), 125–157 (QHDA…KFWD), 168–206 (QLPE…EFRR), 215–255 (HRCV…KDNF), 271–301 (QDIY…SFWD), and 310–346 (TSEQ…EFYN). A Phosphothreonine modification is found at Thr-229.

This sequence belongs to the WD repeat rae1 family. In terms of assembly, interacts with NUMA1 (via N-terminal end of the coiled-coil domain); this interaction promotes spindle formation in mitosis. Interacts with NUP98. Interacts with MYCBP2. Interacts with USP11.

The protein resides in the cytoplasm. Its subcellular location is the nucleus. It is found in the cytoskeleton. The protein localises to the spindle pole. Functionally, plays a role in mitotic bipolar spindle formation. Binds mRNA. May function in nucleocytoplasmic transport and in directly or indirectly attaching cytoplasmic mRNPs to the cytoskeleton. This is mRNA export factor (Rae1) from Mus musculus (Mouse).